The primary structure comprises 978 residues: MVSINQNFKLPISMNSQPIQIQQQQFKQPQQQPQQKSNSCFSDQENYPANIQPSSSTSSSSSSSIHITKSMVIRPPLESNQPQPQQQQQQQQTLQQIHHQQVQLQQQQSLQMQQQQLQQQQQQQQQQQMPPPQSLPNKSNEPQEPIVVYETIRSGDSKRLKEYRQGEFLGKGGFAKCYLMTEVETNRIYAAKIIPKSTLQKTRARSKLKSEIKIHSSLSHENIVKFEHCFENEENVYILLELCNQKTVMDIHKKRKYLMEYETKYYVYQVIMAVQYLHNNNIIHRDLKLGNLFIDNMRIKLGDFGLSTKVEHGERKKTICGTPNYIAPEILDNSNGHSYEVDVWSIGIILYTLLIGKPPFETSDVKHTYQRIKQNQYSFPDEPIISHYGKSLIISILNPVPEQRPNLTQILEHDFFTYSPIPKYLPVSSLTTAPSQSTINQNMGRPLSEKTNIVNQQHLQLAGTTSPTKNNNHHYQQYQQQPQQQYNNNYQQSFSPKKQINNMNNNNNNNNNNNNNNNNNNNNNNNNLKQYNYSNNNINYNNNNNNINNQFANLSPNSQQKLSEVENDDFHYRKLRRLEKMKENDLKTQLLIKQQYTNMNENQQQQQQQQQQQQQQQQQQQRVNNNINNNGNTVTVTTGNNTVNVQIKELETKIANNHISDSPPVSSNNNYPQQIQKQQPNFNNEFYLGMPNNLVYISQYADFTNKYGLAYVLSNSYVGAYFNDSTKIVTLIESEIAYYMEHAKGTDGDGRRVLNVTQQHPHDTQKKVTLIKYFLNHFTNSDTTNLLINTGATSSSINNNNNNNVENVTNNNNNNSNNSSNINPIYVKKWIKFDNGIAFRLSDKTIQVNYLDKSRIIVSSKDMVTFVPYRGQIITGTLNYFKNGDKKISEKIKYIYGTLSNNLYSKKPESSFQQLPQQQYQQPQHYQQQTQQPQPQPQQQQLPQQLPQPQQSPAKQHQYQPNQIQYQQSIPQPQLINQ.

A compositionally biased stretch (low complexity) spans I19 to K36. Disordered stretches follow at residues I19–H66 and Q121–Q143. Over residues S37–P53 the composition is skewed to polar residues. Residues S54 to S64 show a composition bias toward low complexity. Residues Y163 to F416 enclose the Protein kinase domain. Residues L169–C177 and K192 contribute to the ATP site. The active-site Proton acceptor is D286. 2 disordered regions span residues G463–L554 and E601–T638. Low complexity-rich tracts occupy residues H473–Q492 and I500–N549. Coiled-coil stretches lie at residues K497 to S555 and I592 to N630. In terms of domain architecture, POLO box 1 spans Y696–N780. The disordered stretch occupies residues N798–S819. Residues Y826 to Y904 form the POLO box 2 domain. Residues P908–Q978 are disordered. Residues Q913–Q978 are compositionally biased toward low complexity.

Belongs to the protein kinase superfamily. Ser/Thr protein kinase family. CDC5/Polo subfamily.

It carries out the reaction L-seryl-[protein] + ATP = O-phospho-L-seryl-[protein] + ADP + H(+). It catalyses the reaction L-threonyl-[protein] + ATP = O-phospho-L-threonyl-[protein] + ADP + H(+). In Dictyostelium discoideum (Social amoeba), this protein is Probable serine/threonine-protein kinase PLK (PLK).